A 256-amino-acid chain; its full sequence is Ubiquinone/menaquinone biosynthesis C-methyltransferase UbiE (256 aa).

S-adenosyl-L-methionine contacts are provided by residues Thr79, Asp100, and Asp128 to Ala129.

This sequence belongs to the class I-like SAM-binding methyltransferase superfamily. MenG/UbiE family.

It catalyses the reaction a 2-demethylmenaquinol + S-adenosyl-L-methionine = a menaquinol + S-adenosyl-L-homocysteine + H(+). It carries out the reaction a 2-methoxy-6-(all-trans-polyprenyl)benzene-1,4-diol + S-adenosyl-L-methionine = a 5-methoxy-2-methyl-3-(all-trans-polyprenyl)benzene-1,4-diol + S-adenosyl-L-homocysteine + H(+). It participates in quinol/quinone metabolism; menaquinone biosynthesis; menaquinol from 1,4-dihydroxy-2-naphthoate: step 2/2. It functions in the pathway cofactor biosynthesis; ubiquinone biosynthesis. Its function is as follows. Methyltransferase required for the conversion of demethylmenaquinol (DMKH2) to menaquinol (MKH2) and the conversion of 2-polyprenyl-6-methoxy-1,4-benzoquinol (DDMQH2) to 2-polyprenyl-3-methyl-6-methoxy-1,4-benzoquinol (DMQH2). The chain is Ubiquinone/menaquinone biosynthesis C-methyltransferase UbiE from Stutzerimonas stutzeri (strain A1501) (Pseudomonas stutzeri).